The chain runs to 132 residues: Large ribosomal subunit protein uL14 (132 aa).

The protein belongs to the universal ribosomal protein uL14 family. Part of the 50S ribosomal subunit. Forms a cluster with proteins L3 and L24e, part of which may contact the 16S rRNA in 2 intersubunit bridges.

Functionally, binds to 23S rRNA. Forms part of two intersubunit bridges in the 70S ribosome. The chain is Large ribosomal subunit protein uL14 from Methanococcus aeolicus (strain ATCC BAA-1280 / DSM 17508 / OCM 812 / Nankai-3).